We begin with the raw amino-acid sequence, 570 residues long: Dihydroxy-acid dehydratase (570 aa).

Cysteine 61 serves as a coordination point for [2Fe-2S] cluster. Residue aspartate 94 participates in Mg(2+) binding. [2Fe-2S] cluster is bound at residue cysteine 135. The Mg(2+) site is built by aspartate 136 and lysine 137. The residue at position 137 (lysine 137) is an N6-carboxylysine. Cysteine 207 contacts [2Fe-2S] cluster. Residue glutamate 459 participates in Mg(2+) binding. Serine 485 acts as the Proton acceptor in catalysis.

It belongs to the IlvD/Edd family. As to quaternary structure, homodimer. It depends on [2Fe-2S] cluster as a cofactor. The cofactor is Mg(2+).

It carries out the reaction (2R)-2,3-dihydroxy-3-methylbutanoate = 3-methyl-2-oxobutanoate + H2O. The catalysed reaction is (2R,3R)-2,3-dihydroxy-3-methylpentanoate = (S)-3-methyl-2-oxopentanoate + H2O. The protein operates within amino-acid biosynthesis; L-isoleucine biosynthesis; L-isoleucine from 2-oxobutanoate: step 3/4. Its pathway is amino-acid biosynthesis; L-valine biosynthesis; L-valine from pyruvate: step 3/4. In terms of biological role, functions in the biosynthesis of branched-chain amino acids. Catalyzes the dehydration of (2R,3R)-2,3-dihydroxy-3-methylpentanoate (2,3-dihydroxy-3-methylvalerate) into 2-oxo-3-methylpentanoate (2-oxo-3-methylvalerate) and of (2R)-2,3-dihydroxy-3-methylbutanoate (2,3-dihydroxyisovalerate) into 2-oxo-3-methylbutanoate (2-oxoisovalerate), the penultimate precursor to L-isoleucine and L-valine, respectively. This chain is Dihydroxy-acid dehydratase, found in Lactococcus lactis subsp. cremoris (strain MG1363).